Here is a 93-residue protein sequence, read N- to C-terminus: Large ribosomal subunit protein uL23cz/uL23cy (93 aa).

It belongs to the universal ribosomal protein uL23 family. Part of the 50S ribosomal subunit.

Its subcellular location is the plastid. The protein localises to the chloroplast. Its function is as follows. Binds to 23S rRNA. The polypeptide is Large ribosomal subunit protein uL23cz/uL23cy (rpl23-A) (Lactuca sativa (Garden lettuce)).